The following is a 96-amino-acid chain: Large ribosomal subunit protein eL14 (96 aa).

This sequence belongs to the eukaryotic ribosomal protein eL14 family.

The sequence is that of Large ribosomal subunit protein eL14 from Sulfolobus acidocaldarius (strain ATCC 33909 / DSM 639 / JCM 8929 / NBRC 15157 / NCIMB 11770).